The primary structure comprises 508 residues: Probable polyol transporter 3 (508 aa).

12 helical membrane passes run 21 to 41 (FAFG…YDTG), 60 to 80 (QIEV…LTAG), 90 to 110 (YTIA…GYGP), 120 to 140 (CIAG…SAEI), 147 to 167 (GFLT…GYVS), 178 to 198 (LGWR…AFGI), 280 to 300 (ILIA…EAVV), 318 to 338 (LLLA…IATF), 348 to 368 (LLLT…VSLT), 384 to 404 (IVST…ITWV), 418 to 438 (GASI…MSFL), and 448 to 468 (GVFF…FFML).

It belongs to the major facilitator superfamily. Sugar transporter (TC 2.A.1.1) family.

The protein resides in the membrane. In terms of biological role, plasma membrane sugar-proton symporter. This is Probable polyol transporter 3 (PLT3) from Arabidopsis thaliana (Mouse-ear cress).